The chain runs to 365 residues: DNA replication and repair protein RecF (365 aa).

Residue 30–37 (GQNGSGKT) participates in ATP binding.

This sequence belongs to the RecF family.

The protein localises to the cytoplasm. In terms of biological role, the RecF protein is involved in DNA metabolism; it is required for DNA replication and normal SOS inducibility. RecF binds preferentially to single-stranded, linear DNA. It also seems to bind ATP. This chain is DNA replication and repair protein RecF, found in Shewanella woodyi (strain ATCC 51908 / MS32).